The sequence spans 645 residues: Transcription termination factor FttA (645 aa).

The segment at Ala10 to Arg77 is KHa. Residues Lys78 to Thr146 are KHb. A metallo-beta-lactamase N-terminus region spans residues Glu187–Lys391. Residues His250, His252, Asp254, His255, His337, and Asp360 each contribute to the Zn(2+) site. A beta-Casp region spans residues Glu392–Ser586. Positions Gly587–Phe645 are metallo-beta-lactamase C-terminus. Zn(2+) is bound at residue His612.

This sequence belongs to the metallo-beta-lactamase superfamily. RNA-metabolizing metallo-beta-lactamase-like family. FttA subfamily. As to quaternary structure, homodimer. Interacts with RNA polymerase (RNAP), interacts with the Spt4-Spt5 complex. Zn(2+) is required as a cofactor.

Terminates transcription on the whole genome. Termination is linked to FttA-mediated RNA cleavage and does not require NTP hydrolysis. Cleaves endonucleolytically at the RNA exit channel of RNA polymerase (RNAP); the 5'-3' exonuclease activity of this protein degrades the nascent RNA released from RNAP. In terms of biological role, terminates transcription genome-wide in M.maripaludis. Restores wild-type growth to a strain of Methanococcus maripaludis depleted for this gene at 22 degrees Celsius and prevents transcriptional read-through. Transcription termination is most effective in vivo on RNAs with more than one U4-tract in their 3'-ends. Has endonuclease activity after U-rich tracts in transcription termination sequences. The chain is Transcription termination factor FttA from Cenarchaeum symbiosum (strain A).